Consider the following 354-residue polypeptide: Peptide chain release factor 1 (354 aa).

Gln230 carries the post-translational modification N5-methylglutamine.

It belongs to the prokaryotic/mitochondrial release factor family. Post-translationally, methylated by PrmC. Methylation increases the termination efficiency of RF1.

The protein localises to the cytoplasm. In terms of biological role, peptide chain release factor 1 directs the termination of translation in response to the peptide chain termination codons UAG and UAA. In Leptospira interrogans serogroup Icterohaemorrhagiae serovar copenhageni (strain Fiocruz L1-130), this protein is Peptide chain release factor 1.